A 107-amino-acid chain; its full sequence is Protein Rev (107 aa).

Residue S5 is modified to Phosphoserine; by host CK2. A homomultimerization region spans residues 18-26 (AIKILYQSN). 2 disordered regions span residues 24-48 (QSNP…WRAR) and 82-107 (HLDC…VGRS). A Nuclear localization signal and RNA-binding (RRE) motif is present at residues 34 to 50 (TRQARRNRRRRWRARQR). Residues 36–48 (QARRNRRRRWRAR) are compositionally biased toward basic residues. The Nuclear export signal and binding to XPO1 signature appears at 73–84 (LQLPPLERLHLD). Polar residues predominate over residues 88–101 (DSGTSGTQQPQGTE). S92 carries the phosphoserine; by host modification.

The protein belongs to the HIV-1 REV protein family. In terms of assembly, homomultimer; when bound to the RRE. Multimeric assembly is essential for activity and may involve XPO1. Binds to human KPNB1, XPO1, TNPO1, RANBP5 and IPO7. Interacts with the viral Integrase. Interacts with human KHDRBS1. Interacts with human NAP1; this interaction decreases Rev multimerization and stimulates its activity. Interacts with human DEAD-box helicases DDX3 and DDX24; these interactions may serve for viral RNA export to the cytoplasm and packaging, respectively. Interacts with human PSIP1; this interaction may inhibit HIV-1 DNA integration by promoting dissociation of the Integrase-LEDGF/p75 complex. Post-translationally, asymmetrically arginine dimethylated at one site by host PRMT6. Methylation impairs the RNA-binding activity and export of viral RNA from the nucleus to the cytoplasm. Phosphorylated by protein kinase CK2. Presence of, and maybe binding to the N-terminus of the regulatory beta subunit of CK2 is necessary for CK2-mediated Rev's phosphorylation.

The protein resides in the host nucleus. The protein localises to the host nucleolus. Its subcellular location is the host cytoplasm. In terms of biological role, escorts unspliced or incompletely spliced viral pre-mRNAs (late transcripts) out of the nucleus of infected cells. These pre-mRNAs carry a recognition sequence called Rev responsive element (RRE) located in the env gene, that is not present in fully spliced viral mRNAs (early transcripts). This function is essential since most viral proteins are translated from unspliced or partially spliced pre-mRNAs which cannot exit the nucleus by the pathway used by fully processed cellular mRNAs. Rev itself is translated from a fully spliced mRNA that readily exits the nucleus. Rev's nuclear localization signal (NLS) binds directly to KPNB1/Importin beta-1 without previous binding to KPNA1/Importin alpha-1. KPNB1 binds to the GDP bound form of RAN (Ran-GDP) and targets Rev to the nucleus. In the nucleus, the conversion from Ran-GDP to Ran-GTP dissociates Rev from KPNB1 and allows Rev's binding to the RRE in viral pre-mRNAs. Rev multimerization on the RRE via cooperative assembly exposes its nuclear export signal (NES) to the surface. Rev can then form a complex with XPO1/CRM1 and Ran-GTP, leading to nuclear export of the complex. Conversion from Ran-GTP to Ran-GDP mediates dissociation of the Rev/RRE/XPO1/RAN complex, so that Rev can return to the nucleus for a subsequent round of export. Beside KPNB1, also seems to interact with TNPO1/Transportin-1, RANBP5/IPO5 and IPO7/RANBP7 for nuclear import. The nucleoporin-like HRB/RIP is an essential cofactor that probably indirectly interacts with Rev to release HIV RNAs from the perinuclear region to the cytoplasm. The polypeptide is Protein Rev (Human immunodeficiency virus type 1 group M subtype G (isolate SE6165) (HIV-1)).